We begin with the raw amino-acid sequence, 532 residues long: 56 kDa type-specific antigen (532 aa).

Residues 1-22 form the signal peptide; that stretch reads MKKIMLIASAMSALSLPFSASA. The chain crosses the membrane as a helical span at residues 67-87; it reads TNGLPFGGTLAAGMTIAPGFR. The segment at 401-428 is disordered; the sequence is QEEDAKNQGEGDCKQQQGTSEKSKKGKD. A compositionally biased stretch (basic and acidic residues) spans 403-413; sequence EDAKNQGEGDC. Residues 480–500 traverse the membrane as a helical segment; sequence TGMVASGALGVAINAAEGVYV.

It localises to the cell membrane. Its function is as follows. May be an adherent factor for rickettsial adsorption to the host-cell surface and a determinant of virulence of individual rickettsial strain. It is the major outer membrane protein. This chain is 56 kDa type-specific antigen, found in Orientia tsutsugamushi (Rickettsia tsutsugamushi).